The following is a 480-amino-acid chain: Proline--tRNA ligase (480 aa).

This sequence belongs to the class-II aminoacyl-tRNA synthetase family. ProS type 3 subfamily. In terms of assembly, homodimer.

It localises to the cytoplasm. The enzyme catalyses tRNA(Pro) + L-proline + ATP = L-prolyl-tRNA(Pro) + AMP + diphosphate. Functionally, catalyzes the attachment of proline to tRNA(Pro) in a two-step reaction: proline is first activated by ATP to form Pro-AMP and then transferred to the acceptor end of tRNA(Pro). The protein is Proline--tRNA ligase of Roseiflexus sp. (strain RS-1).